Reading from the N-terminus, the 514-residue chain is Glutathione-binding protein GsiB (514 aa).

An N-terminal signal peptide occupies residues 1-27 (MSVMTIQRRWLVAAGVTAAMVASPVWA).

This sequence belongs to the bacterial solute-binding protein 5 family. The complex is composed of two ATP-binding proteins (GsiA), two transmembrane proteins (GsiC and GsiD) and a solute-binding protein (GsiB).

The protein localises to the periplasm. Its function is as follows. Part of the ABC transporter complex GsiABCD involved in glutathione import. Binds glutathione. The sequence is that of Glutathione-binding protein GsiB from Pectobacterium atrosepticum (strain SCRI 1043 / ATCC BAA-672) (Erwinia carotovora subsp. atroseptica).